The sequence spans 1370 residues: DNA-directed RNA polymerase subunit beta (1370 aa).

The protein belongs to the RNA polymerase beta chain family. The RNAP catalytic core consists of 2 alpha, 1 beta, 1 beta' and 1 omega subunit. When a sigma factor is associated with the core the holoenzyme is formed, which can initiate transcription.

The catalysed reaction is RNA(n) + a ribonucleoside 5'-triphosphate = RNA(n+1) + diphosphate. Its function is as follows. DNA-dependent RNA polymerase catalyzes the transcription of DNA into RNA using the four ribonucleoside triphosphates as substrates. The protein is DNA-directed RNA polymerase subunit beta of Bordetella avium (strain 197N).